We begin with the raw amino-acid sequence, 396 residues long: Arginine biosynthesis bifunctional protein ArgJ (396 aa).

Residues Thr-147, Lys-173, Thr-184, Glu-270, Asn-391, and Ser-396 each contribute to the substrate site. The active-site Nucleophile is the Thr-184.

This sequence belongs to the ArgJ family. In terms of assembly, heterotetramer of two alpha and two beta chains.

It is found in the cytoplasm. It catalyses the reaction N(2)-acetyl-L-ornithine + L-glutamate = N-acetyl-L-glutamate + L-ornithine. The enzyme catalyses L-glutamate + acetyl-CoA = N-acetyl-L-glutamate + CoA + H(+). The protein operates within amino-acid biosynthesis; L-arginine biosynthesis; L-ornithine and N-acetyl-L-glutamate from L-glutamate and N(2)-acetyl-L-ornithine (cyclic): step 1/1. It functions in the pathway amino-acid biosynthesis; L-arginine biosynthesis; N(2)-acetyl-L-ornithine from L-glutamate: step 1/4. In terms of biological role, catalyzes two activities which are involved in the cyclic version of arginine biosynthesis: the synthesis of N-acetylglutamate from glutamate and acetyl-CoA as the acetyl donor, and of ornithine by transacetylation between N(2)-acetylornithine and glutamate. This chain is Arginine biosynthesis bifunctional protein ArgJ, found in Lactococcus lactis subsp. lactis (strain IL1403) (Streptococcus lactis).